We begin with the raw amino-acid sequence, 93 residues long: Small ribosomal subunit protein uS19 (93 aa).

The protein belongs to the universal ribosomal protein uS19 family.

In terms of biological role, protein S19 forms a complex with S13 that binds strongly to the 16S ribosomal RNA. The sequence is that of Small ribosomal subunit protein uS19 from Pediococcus pentosaceus (strain ATCC 25745 / CCUG 21536 / LMG 10740 / 183-1w).